Here is a 402-residue protein sequence, read N- to C-terminus: Advanced glycosylation end product-specific receptor (402 aa).

The signal sequence occupies residues 1 to 22 (MPAGTAARAWVLVLALWGAVAG). The Ig-like V-type domain occupies 23–109 (GQNITARIGE…ATNRRGKEVK (87 aa)). The Extracellular segment spans residues 23–340 (GQNITARIGE…VGESGLGTLA (318 aa)). N-linked (GlcNAc...) asparagine glycans are attached at residues Asn25 and Asn80. Disulfide bonds link Cys38/Cys98 and Cys143/Cys206. 2 consecutive Ig-like C2-type domains span residues 123-219 (PEIV…RPLN) and 233-315 (PEGI…PPVS). A disordered region spans residues 295–332 (GTYSCVATHPSHGPQESPPVSIRVTETGDEGPAEGSVG). Residues 341-361 (LALGILGGLGVVALLVGAILW) traverse the membrane as a helical segment. Residues 362 to 402 (RKRQPRREERKAPESQEDEEERAELNQSEEAEMPENGAGGP) are Cytoplasmic-facing. Residues 365 to 402 (QPRREERKAPESQEDEEERAELNQSEEAEMPENGAGGP) form a disordered region. 2 positions are modified to phosphoserine; by ATM: Ser376 and Ser389. Residues 376–394 (SQEDEEERAELNQSEEAEM) show a composition bias toward acidic residues.

Constitutive homodimer; disulfide-linked. Forms homooligomers. Interacts with S100A1 and APP. Interacts with S100B, S100A12 and S100A14. Interacts with TIRAP. Interacts with HMGB1. Interacts with LGP2; this interaction plays an important role in AGER-mediated pro-inflammatory responses and cytokine release. Interacts with double-strand break repair protein MRE11 which is a core component of the MRN complex; the interaction enhances MRE11 endonuclease activity and promotes DNA repair. Interacts with the MCM2-7 complex via interaction with complex member MCM2; the interaction is increased following DNA replication stress and stabilizes the MCM2-7 complex at replication forks. Phosphorylated on its cytoplasmic domain by PKCzeta/PRKCZ upon ligand binding. Phosphorylated by ATM following DNA damage. Post-translationally, targeted by the ubiquitin E3 ligase subunit FBXO10 to mediate its ubiquitination and degradation. Isoform 1: Expressed at higher levels in the coronary arterioles in type 2 diabetic mice (at protein level). Endothelial cells. Expressed in lung, kidney, brain and heart. Most prevalent isoform with the highest level in heart. Isoform 2: Expressed in brain, lung, kidney and small intestine with the highest level in lung. Expressed in brain, lung, kidney and small intestine with the highest level in small intestine (at protein level). Detected in neurons of the cerebrum, bronchial epithelium, endothelial cells, tubular cells of kidney and epithelial cells of small intestine (at protein level). Expression is increased in the kidney of diabetic wild-type mice (at protein level), but not in the other tissues. Expressed only in kidney. Expression is increased in the kidney of diabetic mice. Isoform 3: Expressed in lung, kidney and heart. The second most prevalent isoform with the highest level in lung. Not expressed in brain. Isoform 4: Expressed at very low level in lung only. Isoform 5: Expressed at very low level in lung only. Isoform 6: Expressed at very low level in lung only. Isoform 7: Expressed at very low level in heart only. Isoform 8: Expressed at very low level in lung only. Isoform 9: Expressed at very low level in heart only. Isoform 10: Expressed in lung, brain, heart and kidney with a very high level in kidney. Isoform 11: Expressed in brain, kidney and heart. Not expressed in lung. Isoform 12: Expressed at very low level in lung and kidney. Isoform 13: Expressed at very low level in lung only.

It localises to the cell membrane. The protein resides in the cell projection. Its subcellular location is the phagocytic cup. It is found in the early endosome. The protein localises to the nucleus. It localises to the secreted. Functionally, cell surface pattern recognition receptor that senses endogenous stress signals with a broad ligand repertoire including advanced glycation end products, S100 proteins, high-mobility group box 1 protein/HMGB1, amyloid beta/APP oligomers, nucleic acids, histones, phospholipids and glycosaminoglycans. Advanced glycosylation end products are nonenzymatically glycosylated proteins which accumulate in vascular tissue in aging and at an accelerated rate in diabetes. These ligands accumulate at inflammatory sites during the pathogenesis of various diseases including diabetes, vascular complications, neurodegenerative disorders and cancers, and RAGE transduces their binding into pro-inflammatory responses. Upon ligand binding, uses TIRAP and MYD88 as adapters to transduce the signal ultimately leading to the induction of inflammatory cytokines IL6, IL8 and TNFalpha through activation of NF-kappa-B. Interaction with S100A12 on endothelium, mononuclear phagocytes, and lymphocytes triggers cellular activation, with generation of key pro-inflammatory mediators. Interaction with S100B after myocardial infarction may play a role in myocyte apoptosis by activating ERK1/2 and p53/TP53 signaling. Contributes to the translocation of amyloid-beta peptide (ABPP) across the cell membrane from the extracellular to the intracellular space in cortical neurons. ABPP-initiated RAGE signaling, especially stimulation of p38 mitogen-activated protein kinase (MAPK), has the capacity to drive a transport system delivering ABPP as a complex with RAGE to the intraneuronal space. Participates in endothelial albumin transcytosis together with HMGB1 through the RAGE/SRC/Caveolin-1 pathway, leading to endothelial hyperpermeability. Mediates the loading of HMGB1 in extracellular vesicles (EVs) that shuttle HMGB1 to hepatocytes by transferrin-mediated endocytosis and subsequently promote hepatocyte pyroptosis by activating the NLRP3 inflammasome. Binds to DNA and promotes extracellular hypomethylated DNA (CpG DNA) uptake by cells via the endosomal route to activate inflammatory responses. Mediates phagocytosis by non-professional phagocytes (NPP) and this is enhanced by binding to ligands including RNA, DNA, HMGB1 and histones. Promotes NPP-mediated phagocytosis of Saccharomyces cerevisiae spores by binding to RNA attached to the spore wall. Also promotes NPP-mediated phagocytosis of apoptotic cells. Following DNA damage, recruited to DNA double-strand break sites where it colocalizes with the MRN repair complex via interaction with double-strand break repair protein MRE11. Enhances the endonuclease activity of MRE11, promoting the end resection of damaged DNA. Promotes DNA damage repair in trophoblasts which enhances trophoblast invasion and contributes to placental development and maintenance. Protects cells from DNA replication stress by localizing to damaged replication forks where it stabilizes the MCM2-7 complex and promotes faithful progression of the replication fork. In terms of biological role, is able to advanced glycosylation end product (AGE)-induce nuclear factor NF-kappa-B activation. Down-regulates receptor for advanced glycosylation end products (RAGE)-ligand induced signaling through various MAPK pathways including ERK1/2, p38 and SAPK/JNK. Significantly affects tumor cell properties through decreasing cell migration, invasion, adhesion and proliferation, and increasing cellular apoptosis. Exhibits drastic inhibition on tumorigenesis in vitro. The polypeptide is Advanced glycosylation end product-specific receptor (Ager) (Mus musculus (Mouse)).